Reading from the N-terminus, the 482-residue chain is GTPase Obg (482 aa).

The Obg domain maps to 2–159; the sequence is PRFVDRVVIH…VDLTLELKTV (158 aa). The 181-residue stretch at 160–340 folds into the OBG-type G domain; sequence ADVGLVGFPS…LTFALWEMIV (181 aa). Residues 166–173, 191–195, 212–215, 292–295, and 321–323 each bind GTP; these read GFPSAGKS, FTTLV, DVPG, NKVD, and STL. Positions 173 and 193 each coordinate Mg(2+). The OCT domain maps to 358 to 438; that stretch reads PIPVDESGFT…IGDMTFDWEP (81 aa). Residues 441–482 form a disordered region; the sequence is PAGVDVTMSGRGTDARIDKTDRVGAAERRQARRVRRGQVEPE. A compositionally biased stretch (basic and acidic residues) spans 453 to 469; the sequence is TDARIDKTDRVGAAERR.

The protein belongs to the TRAFAC class OBG-HflX-like GTPase superfamily. OBG GTPase family. As to quaternary structure, monomer. Mg(2+) serves as cofactor.

The protein localises to the cytoplasm. Its function is as follows. An essential GTPase which binds GTP, GDP and possibly (p)ppGpp with moderate affinity, with high nucleotide exchange rates and a fairly low GTP hydrolysis rate. Plays a role in control of the cell cycle, stress response, ribosome biogenesis and in those bacteria that undergo differentiation, in morphogenesis control. The sequence is that of GTPase Obg from Mycobacteroides abscessus (strain ATCC 19977 / DSM 44196 / CCUG 20993 / CIP 104536 / JCM 13569 / NCTC 13031 / TMC 1543 / L948) (Mycobacterium abscessus).